A 763-amino-acid polypeptide reads, in one-letter code: Xaa-Pro dipeptidyl-peptidase (763 aa).

Active-site charge relay system residues include serine 348, aspartate 468, and histidine 498.

The protein belongs to the peptidase S15 family. As to quaternary structure, homodimer.

Its subcellular location is the cytoplasm. The enzyme catalyses Hydrolyzes Xaa-Pro-|- bonds to release unblocked, N-terminal dipeptides from substrates including Ala-Pro-|-p-nitroanilide and (sequentially) Tyr-Pro-|-Phe-Pro-|-Gly-Pro-|-Ile.. In terms of biological role, removes N-terminal dipeptides sequentially from polypeptides having unsubstituted N-termini provided that the penultimate residue is proline. The polypeptide is Xaa-Pro dipeptidyl-peptidase (pepX) (Lactococcus lactis subsp. lactis (strain IL1403) (Streptococcus lactis)).